The following is a 72-amino-acid chain: Translation initiation factor IF-1 (72 aa).

Positions 1 to 72 (MAKEDCIEMQ…SKARIIFRAR (72 aa)) constitute an S1-like domain.

It belongs to the IF-1 family. Component of the 30S ribosomal translation pre-initiation complex which assembles on the 30S ribosome in the order IF-2 and IF-3, IF-1 and N-formylmethionyl-tRNA(fMet); mRNA recruitment can occur at any time during PIC assembly.

It localises to the cytoplasm. In terms of biological role, one of the essential components for the initiation of protein synthesis. Stabilizes the binding of IF-2 and IF-3 on the 30S subunit to which N-formylmethionyl-tRNA(fMet) subsequently binds. Helps modulate mRNA selection, yielding the 30S pre-initiation complex (PIC). Upon addition of the 50S ribosomal subunit IF-1, IF-2 and IF-3 are released leaving the mature 70S translation initiation complex. The sequence is that of Translation initiation factor IF-1 from Actinobacillus pleuropneumoniae serotype 5b (strain L20).